The following is a 184-amino-acid chain: Adenylate kinase (184 aa).

Residue 12–17 (GAGKGT) participates in ATP binding. Positions 32-61 (STGELLRKEIDLDTDLGKQVKDIMNRGELV) are NMP. AMP-binding positions include Thr33, Arg38, 59 to 61 (ELV), 85 to 88 (GYPR), and Gln92. The LID stretch occupies residues 126–132 (IRGRKDD). Residue Arg127 participates in ATP binding. Residues Arg129 and Arg140 each contribute to the AMP site. Gly168 serves as a coordination point for ATP.

The protein belongs to the adenylate kinase family. In terms of assembly, monomer.

It localises to the cytoplasm. The enzyme catalyses AMP + ATP = 2 ADP. The protein operates within purine metabolism; AMP biosynthesis via salvage pathway; AMP from ADP: step 1/1. Catalyzes the reversible transfer of the terminal phosphate group between ATP and AMP. Plays an important role in cellular energy homeostasis and in adenine nucleotide metabolism. The protein is Adenylate kinase of Prochlorococcus marinus subsp. pastoris (strain CCMP1986 / NIES-2087 / MED4).